The following is a 79-amino-acid chain: Small ribosomal subunit protein bS18 (79 aa).

It belongs to the bacterial ribosomal protein bS18 family. Part of the 30S ribosomal subunit. Forms a tight heterodimer with protein bS6.

In terms of biological role, binds as a heterodimer with protein bS6 to the central domain of the 16S rRNA, where it helps stabilize the platform of the 30S subunit. This is Small ribosomal subunit protein bS18 from Bradyrhizobium diazoefficiens (strain JCM 10833 / BCRC 13528 / IAM 13628 / NBRC 14792 / USDA 110).